A 246-amino-acid polypeptide reads, in one-letter code: Endonuclease NucS (246 aa).

Belongs to the NucS endonuclease family.

The protein localises to the cytoplasm. Its function is as follows. Cleaves both 3' and 5' ssDNA extremities of branched DNA structures. This is Endonuclease NucS from Corynebacterium urealyticum (strain ATCC 43042 / DSM 7109).